A 415-amino-acid polypeptide reads, in one-letter code: WD repeat-containing protein JIP5 (415 aa).

5 WD repeats span residues 5–44 (DVGSQIFDVVFHPTFATVYTGLLNGHVKAFAYNEQGKEQA), 104–142 (AHDSTINRVKYLMPWLISTGDDDGVIKLWDPRQQECVRE), 145–184 (QHFDYITDFLWLDDKKQLVATSGDGTLSVMDVRSKKPEPF), 189–228 (DQDDELLSIVAIKGHSKIVVGTQLGILSIFNRSKGWGDCV), and 233–282 (GHPL…VVAD). A disordered region spans residues 328–415 (GALGVTNENE…DVENAFFDEL (88 aa)). The segment covering 337-346 (EQSDEDEEMD) has biased composition (acidic residues). Residues 358-367 (DGSGSSSSGE) are compositionally biased toward low complexity. Positions 390–405 (EQKPLDVDKPKGRNEI) are enriched in basic and acidic residues.

Belongs to the WD repeat WDR55 family.

It is found in the nucleus. The protein resides in the nucleolus. The protein is WD repeat-containing protein JIP5 (JIP5) of Laccaria bicolor (strain S238N-H82 / ATCC MYA-4686) (Bicoloured deceiver).